The sequence spans 37 residues: Large ribosomal subunit protein bL36 (37 aa).

It belongs to the bacterial ribosomal protein bL36 family.

This chain is Large ribosomal subunit protein bL36, found in Thermobifida fusca (strain YX).